The sequence spans 468 residues: 3-isopropylmalate dehydratase large subunit (468 aa).

C345, C405, and C408 together coordinate [4Fe-4S] cluster.

The protein belongs to the aconitase/IPM isomerase family. LeuC type 1 subfamily. Heterodimer of LeuC and LeuD. Requires [4Fe-4S] cluster as cofactor.

It carries out the reaction (2R,3S)-3-isopropylmalate = (2S)-2-isopropylmalate. It functions in the pathway amino-acid biosynthesis; L-leucine biosynthesis; L-leucine from 3-methyl-2-oxobutanoate: step 2/4. Catalyzes the isomerization between 2-isopropylmalate and 3-isopropylmalate, via the formation of 2-isopropylmaleate. In Oceanobacillus iheyensis (strain DSM 14371 / CIP 107618 / JCM 11309 / KCTC 3954 / HTE831), this protein is 3-isopropylmalate dehydratase large subunit.